A 379-amino-acid chain; its full sequence is Cobalt-precorrin-5B C(1)-methyltransferase (379 aa).

This sequence belongs to the CbiD family.

The catalysed reaction is Co-precorrin-5B + S-adenosyl-L-methionine = Co-precorrin-6A + S-adenosyl-L-homocysteine. It functions in the pathway cofactor biosynthesis; adenosylcobalamin biosynthesis; cob(II)yrinate a,c-diamide from sirohydrochlorin (anaerobic route): step 6/10. Functionally, catalyzes the methylation of C-1 in cobalt-precorrin-5B to form cobalt-precorrin-6A. The polypeptide is Cobalt-precorrin-5B C(1)-methyltransferase (Citrobacter koseri (strain ATCC BAA-895 / CDC 4225-83 / SGSC4696)).